A 314-amino-acid chain; its full sequence is Ribonucleoside-diphosphate reductase small subunit (314 aa).

Residues D73, E103, and H106 each contribute to the Fe cation site. The active site involves Y110. A helical transmembrane segment spans residues V160–L180. E166, E200, and H203 together coordinate Fe cation.

This sequence belongs to the ribonucleoside diphosphate reductase small chain family. In terms of assembly, heterotetramer composed of a homodimer of the large subunit (R1) and a homodimer of the small subunit (R2). Larger multisubunit protein complex are also active, composed of (R1)n(R2)n. Requires Fe cation as cofactor.

It is found in the host membrane. The catalysed reaction is a 2'-deoxyribonucleoside 5'-diphosphate + [thioredoxin]-disulfide + H2O = a ribonucleoside 5'-diphosphate + [thioredoxin]-dithiol. Ribonucleoside-diphosphate reductase holoenzyme provides the precursors necessary for viral DNA synthesis. Allows virus growth in non-dividing cells, as well as reactivation from latency in infected hosts. Catalyzes the biosynthesis of deoxyribonucleotides from the corresponding ribonucleotides. The chain is Ribonucleoside-diphosphate reductase small subunit from Bovine herpesvirus 1.1 (strain Cooper) (BoHV-1).